The primary structure comprises 131 residues: Riboflavin kinase (131 aa).

11–16 (GLQKAG) lines the CDP pocket. Thr-40 and Asn-42 together coordinate Mg(2+). Residues Thr-98 and Glu-106 each contribute to the FMN site. 111 to 114 (EKLR) lines the CDP pocket.

Belongs to the archaeal riboflavin kinase family. It depends on Mg(2+) as a cofactor.

The catalysed reaction is riboflavin + CTP = CDP + FMN + H(+). Its pathway is cofactor biosynthesis; FMN biosynthesis; FMN from riboflavin (CTP route): step 1/1. In terms of biological role, catalyzes the CTP-dependent phosphorylation of riboflavin (vitamin B2) to form flavin mononucleotide (FMN). The polypeptide is Riboflavin kinase (Methanosphaera stadtmanae (strain ATCC 43021 / DSM 3091 / JCM 11832 / MCB-3)).